We begin with the raw amino-acid sequence, 374 residues long: Protein RecA (374 aa).

Glycine 77–threonine 84 is a binding site for ATP. The segment at alanine 355 to alanine 374 is disordered.

It belongs to the RecA family.

Its subcellular location is the cytoplasm. Can catalyze the hydrolysis of ATP in the presence of single-stranded DNA, the ATP-dependent uptake of single-stranded DNA by duplex DNA, and the ATP-dependent hybridization of homologous single-stranded DNAs. It interacts with LexA causing its activation and leading to its autocatalytic cleavage. This is Protein RecA from Synechococcus sp. (strain CC9605).